The chain runs to 452 residues: Pup--protein ligase (452 aa).

Glu9 lines the Mg(2+) pocket. Residue Arg53 coordinates ATP. A Mg(2+)-binding site is contributed by Tyr55. The active-site Proton acceptor is Asp57. Residue Glu63 participates in Mg(2+) binding. ATP is bound by residues Thr66 and Trp419.

The protein belongs to the Pup ligase/Pup deamidase family. Pup-conjugating enzyme subfamily.

The enzyme catalyses ATP + [prokaryotic ubiquitin-like protein]-L-glutamate + [protein]-L-lysine = ADP + phosphate + N(6)-([prokaryotic ubiquitin-like protein]-gamma-L-glutamyl)-[protein]-L-lysine.. The protein operates within protein degradation; proteasomal Pup-dependent pathway. It participates in protein modification; protein pupylation. Functionally, catalyzes the covalent attachment of the prokaryotic ubiquitin-like protein modifier Pup to the proteasomal substrate proteins, thereby targeting them for proteasomal degradation. This tagging system is termed pupylation. The ligation reaction involves the side-chain carboxylate of the C-terminal glutamate of Pup and the side-chain amino group of a substrate lysine. The chain is Pup--protein ligase from Streptosporangium roseum (strain ATCC 12428 / DSM 43021 / JCM 3005 / KCTC 9067 / NCIMB 10171 / NRRL 2505 / NI 9100).